Here is a 1221-residue protein sequence, read N- to C-terminus: DNA replication helicase (1221 aa).

A Nuclear localization signal motif is present at residues 692–701 (PKCKCYKKIK). 917 to 924 (GEPGSGKS) provides a ligand contact to ATP. The H-T-H motif DNA-binding region spans 967–981 (INELKQCSESYFKKH).

As to quaternary structure, interacts with IE1 and LEF-3.

The protein resides in the host nucleus. It carries out the reaction ATP + H2O = ADP + phosphate + H(+). Essential for initiation of viral DNA replication, it may contribute to other functions such as controlling the switch to the late phase and leading to the inhibition of host protein synthesis. Required for late and very late gene expression. This Lepidoptera (butterflies and moths) protein is DNA replication helicase (HELI).